Here is a 288-residue protein sequence, read N- to C-terminus: Hydroxyethylthiazole kinase (288 aa).

Met-55 contacts substrate. ATP-binding residues include Asn-131 and Ser-177. Gly-204 is a binding site for substrate.

This sequence belongs to the Thz kinase family. It depends on Mg(2+) as a cofactor.

It carries out the reaction 5-(2-hydroxyethyl)-4-methylthiazole + ATP = 4-methyl-5-(2-phosphooxyethyl)-thiazole + ADP + H(+). It participates in cofactor biosynthesis; thiamine diphosphate biosynthesis; 4-methyl-5-(2-phosphoethyl)-thiazole from 5-(2-hydroxyethyl)-4-methylthiazole: step 1/1. In terms of biological role, catalyzes the phosphorylation of the hydroxyl group of 4-methyl-5-beta-hydroxyethylthiazole (THZ). The sequence is that of Hydroxyethylthiazole kinase from Haloquadratum walsbyi (strain DSM 16790 / HBSQ001).